The chain runs to 244 residues: 5-oxoprolinase subunit A (244 aa).

It belongs to the LamB/PxpA family. As to quaternary structure, forms a complex composed of PxpA, PxpB and PxpC.

It catalyses the reaction 5-oxo-L-proline + ATP + 2 H2O = L-glutamate + ADP + phosphate + H(+). Catalyzes the cleavage of 5-oxoproline to form L-glutamate coupled to the hydrolysis of ATP to ADP and inorganic phosphate. This chain is 5-oxoprolinase subunit A, found in Salmonella newport (strain SL254).